The sequence spans 810 residues: DNA gyrase subunit A (810 aa).

Positions 36-502 (LPDVRDGLKP…EVLKTSMSDL (467 aa)) constitute a Topo IIA-type catalytic domain. Catalysis depends on tyrosine 124, which acts as the O-(5'-phospho-DNA)-tyrosine intermediate. The tract at residues 499–810 (MSDLMQKENI…SLVSVSKFIK (312 aa)) is C-terminal domain. A GyrA-box motif is present at residues 529-535 (QGTGGKG).

The protein belongs to the type II topoisomerase GyrA/ParC subunit family. As to quaternary structure, heterotetramer, composed of two GyrA and two GyrB chains. In the heterotetramer, GyrA contains the active site tyrosine that forms a transient covalent intermediate with DNA, while GyrB binds cofactors and catalyzes ATP hydrolysis.

The protein localises to the cytoplasm. The catalysed reaction is ATP-dependent breakage, passage and rejoining of double-stranded DNA.. Its function is as follows. A type II topoisomerase that negatively supercoils closed circular double-stranded (ds) DNA in an ATP-dependent manner to modulate DNA topology and maintain chromosomes in an underwound state. Negative supercoiling favors strand separation, and DNA replication, transcription, recombination and repair, all of which involve strand separation. Also able to catalyze the interconversion of other topological isomers of dsDNA rings, including catenanes and knotted rings. Type II topoisomerases break and join 2 DNA strands simultaneously in an ATP-dependent manner. The protein is DNA gyrase subunit A of Borreliella burgdorferi (strain ATCC 35210 / DSM 4680 / CIP 102532 / B31) (Borrelia burgdorferi).